The chain runs to 223 residues: Ubiquinone biosynthesis protein COQ4 homolog 2, mitochondrial (223 aa).

The transit peptide at methionine 1–asparagine 26 directs the protein to the mitochondrion. Low complexity predominate over residues threonine 21 to threonine 32. The tract at residues threonine 21–proline 43 is disordered. 4 residues coordinate Zn(2+): histidine 177, aspartate 178, histidine 181, and glutamate 193.

Belongs to the COQ4 family. In terms of assembly, component of a multi-subunit COQ enzyme complex. Requires Zn(2+) as cofactor.

The protein localises to the mitochondrion inner membrane. The enzyme catalyses a 4-hydroxy-3-methoxy-5-(all-trans-polyprenyl)benzoate + H(+) = a 2-methoxy-6-(all-trans-polyprenyl)phenol + CO2. The protein operates within cofactor biosynthesis; ubiquinone biosynthesis. Its function is as follows. Lyase that catalyzes the C1-decarboxylation of 4-hydroxy-3-methoxy-5-(all-trans-polyprenyl)benzoic acid into 2-methoxy-6-(all-trans-polyprenyl)phenol during ubiquinone biosynthesis. The protein is Ubiquinone biosynthesis protein COQ4 homolog 2, mitochondrial of Culex quinquefasciatus (Southern house mosquito).